The primary structure comprises 349 residues: Histidinol-phosphate aminotransferase (349 aa).

N6-(pyridoxal phosphate)lysine is present on Lys-210.

The protein belongs to the class-II pyridoxal-phosphate-dependent aminotransferase family. Histidinol-phosphate aminotransferase subfamily. In terms of assembly, homodimer. It depends on pyridoxal 5'-phosphate as a cofactor.

The catalysed reaction is L-histidinol phosphate + 2-oxoglutarate = 3-(imidazol-4-yl)-2-oxopropyl phosphate + L-glutamate. The protein operates within amino-acid biosynthesis; L-histidine biosynthesis; L-histidine from 5-phospho-alpha-D-ribose 1-diphosphate: step 7/9. The protein is Histidinol-phosphate aminotransferase of Flavobacterium johnsoniae (strain ATCC 17061 / DSM 2064 / JCM 8514 / BCRC 14874 / CCUG 350202 / NBRC 14942 / NCIMB 11054 / UW101) (Cytophaga johnsonae).